The sequence spans 380 residues: Cytochrome b (380 aa).

Transmembrane regions (helical) follow at residues 34-54 (FGSL…LLAM), 78-99 (WLIR…YLHI), 114-134 (WNTG…GYVL), and 179-199 (FFAL…IHLT). H84 and H98 together coordinate heme b. The heme b site is built by H183 and H197. Residue H202 coordinates a ubiquinone. A run of 4 helical transmembrane segments spans residues 227–247 (LKDL…ALFT), 289–309 (LGGV…PFLH), 321–341 (LSQL…WVGS), and 348–368 (FIII…VLLP).

The protein belongs to the cytochrome b family. In terms of assembly, the cytochrome bc1 complex contains 11 subunits: 3 respiratory subunits (MT-CYB, CYC1 and UQCRFS1), 2 core proteins (UQCRC1 and UQCRC2) and 6 low-molecular weight proteins (UQCRH/QCR6, UQCRB/QCR7, UQCRQ/QCR8, UQCR10/QCR9, UQCR11/QCR10 and a cleavage product of UQCRFS1). This cytochrome bc1 complex then forms a dimer. It depends on heme b as a cofactor.

The protein localises to the mitochondrion inner membrane. Functionally, component of the ubiquinol-cytochrome c reductase complex (complex III or cytochrome b-c1 complex) that is part of the mitochondrial respiratory chain. The b-c1 complex mediates electron transfer from ubiquinol to cytochrome c. Contributes to the generation of a proton gradient across the mitochondrial membrane that is then used for ATP synthesis. The chain is Cytochrome b (MT-CYB) from Herpetotheres cachinnans (Laughing falcon).